The sequence spans 458 residues: Methylenetetrahydrofolate--tRNA-(uracil-5-)-methyltransferase TrmFO (458 aa).

11–16 (GGGMAG) is an FAD binding site.

This sequence belongs to the MnmG family. TrmFO subfamily. FAD serves as cofactor.

Its subcellular location is the cytoplasm. It catalyses the reaction uridine(54) in tRNA + (6R)-5,10-methylene-5,6,7,8-tetrahydrofolate + NADH + H(+) = 5-methyluridine(54) in tRNA + (6S)-5,6,7,8-tetrahydrofolate + NAD(+). The catalysed reaction is uridine(54) in tRNA + (6R)-5,10-methylene-5,6,7,8-tetrahydrofolate + NADPH + H(+) = 5-methyluridine(54) in tRNA + (6S)-5,6,7,8-tetrahydrofolate + NADP(+). Functionally, catalyzes the folate-dependent formation of 5-methyl-uridine at position 54 (M-5-U54) in all tRNAs. This is Methylenetetrahydrofolate--tRNA-(uracil-5-)-methyltransferase TrmFO from Jannaschia sp. (strain CCS1).